The primary structure comprises 859 residues: Toll-like receptor 5 (859 aa).

An N-terminal signal peptide occupies residues 1–26; sequence MACQLDLLIGVIFMASPVLVISPCSS. Residues 27 to 641 are Extracellular-facing; it reads DGRIAFFRGC…EEEAMRSLKF (615 aa). Residues asparagine 37, asparagine 46, and asparagine 84 are each glycosylated (N-linked (GlcNAc...) asparagine). LRR repeat units follow at residues 45-69, 72-94, 96-118, 121-144, 147-167, 172-193, 198-212, 215-230, and 235-236; these read LNTT…SFPL, RLQL…AFRN, PNLR…AFQG, HLLE…YFRN, SLAR…HSSF, SLSD…ELEP, TLSF…LFSR, VGWE…VRLE, and SE. The N-linked (GlcNAc...) asparagine glycan is linked to asparagine 246. LRR repeat units lie at residues 261–285, 290–302, 314–335, 338–356, 386–402, and 413–432; these read LKHH…TFAS, SVLQ…GFIF, DLKM…AFYG, SLQV…YNSN, TLQT…AIGF, and GNKL…LELS. N-linked (GlcNAc...) asparagine glycosylation is present at asparagine 343. The N-linked (GlcNAc...) asparagine glycan is linked to asparagine 438. LRR repeat units follow at residues 450 to 471, 475 to 496, 504 to 525, 528 to 547, and 550 to 568; these read QLQF…HTPS, SLEQ…GLCW, RLQI…IFND, ALRM…PGSL, and NLEI…DPAL. An LRRCT domain is found at 580-632; sequence NEFVCNCELSTFISWLNQTNVTLFGSPADVYCMYPNSLLGGSLYNISTEDCDE. Intrachain disulfides connect cysteine 584–cysteine 611 and cysteine 586–cysteine 630. N-linked (GlcNAc...) asparagine glycosylation is found at asparagine 596, asparagine 599, and asparagine 624. A helical membrane pass occupies residues 642 to 662; the sequence is SLFILCTVTLTLFLVITLVVI. At 663-859 the chain is on the cytoplasmic side; it reads KFRGICFLCY…IQLRTIATIS (197 aa). In terms of domain architecture, TIR spans 692 to 837; the sequence is YRYDAYFCFS…WFLDKLSGCI (146 aa). The residue at position 799 (tyrosine 799) is a Phosphotyrosine.

The protein belongs to the Toll-like receptor family. As to quaternary structure, homodimer. Interacts with MYD88 (via TIR domain). Interacts with TICAM1 (via TIR domain). Interacts with UNC93B1; this interaction is essential for proper TLR5 localization to the plasma membrane. In terms of processing, phosphorylated at Tyr-799 upon flagellin binding; required for signaling. Highly expressed in liver. Detected in lung and at very low levels in most other tissues.

The protein resides in the membrane. In terms of biological role, pattern recognition receptor (PRR) located on the cell surface that participates in the activation of innate immunity and inflammatory response. Recognizes small molecular motifs named pathogen-associated molecular pattern (PAMPs) expressed by pathogens and microbe-associated molecular patterns (MAMPs) usually expressed by resident microbiota. Upon ligand binding such as bacterial flagellins, recruits intracellular adapter proteins MYD88 and TRIF leading to NF-kappa-B activation, cytokine secretion and induction of the inflammatory response. Plays thereby an important role in the relationship between the intestinal epithelium and enteric microbes and contributes to the gut microbiota composition throughout life. The chain is Toll-like receptor 5 (Tlr5) from Mus musculus (Mouse).